A 349-amino-acid polypeptide reads, in one-letter code: MVRAKRKLDHIEYALSTGQSRTHGFHDIEFVHQSLPNSSYETITCETKIGELSLSSPIFINAMTGGGGEKTLHINEQLAYVAKHHNLAMAVGSQMAALKDESEAASYKIIRKVNPNGIFFANLGSEATVEQAERAVDMVGANALQIHLNVIQELTMPEGDRDFTGVLQRIEEIVLNSKVPVIVKEVGFGMSKETMQQLASVGVTAIDIGGQGGTNFAAVENERRQRMLSYFNNWGIQTATSIIEATSTNNNLSFIASGGIQTALDVAKAIALGANTTAFAGYFLRILMEDGIEKLVDEIDLLHTDLKFIMTALGAKTIEELQSVPLVIKGETYHWLTQRGIDTTHYSRR.

6 to 7 provides a ligand contact to substrate; the sequence is RK. Residues 62 to 64, serine 93, and asparagine 122 each bind FMN; that span reads AMT. Glutamine 152 provides a ligand contact to substrate. Glutamate 153 contacts Mg(2+). FMN-binding positions include lysine 184, threonine 214, 258 to 259, and 280 to 281; these read GG and AG.

This sequence belongs to the IPP isomerase type 2 family. Homooctamer. Dimer of tetramers. FMN is required as a cofactor. The cofactor is NADPH. Mg(2+) serves as cofactor.

The protein localises to the cytoplasm. It carries out the reaction isopentenyl diphosphate = dimethylallyl diphosphate. Involved in the biosynthesis of isoprenoids. Catalyzes the 1,3-allylic rearrangement of the homoallylic substrate isopentenyl (IPP) to its allylic isomer, dimethylallyl diphosphate (DMAPP). In Bacillus anthracis (strain A0248), this protein is Isopentenyl-diphosphate delta-isomerase.